The chain runs to 586 residues: Switch-associated protein 70 (586 aa).

Residues 210–306 (DVLKQGYMLK…WIQAIQTTVS (97 aa)) form the PH domain. The stretch at 316–538 (HKEARQKRKE…NNTRSWKDKV (223 aa)) forms a coiled coil.

As to quaternary structure, the SWAP complex consists of NPM1, NCL, PARP1 and SWAP70. In terms of processing, tyrosine-phosphorylated.

The protein localises to the cytoplasm. The protein resides in the cell membrane. It is found in the nucleus. It localises to the cell projection. Its subcellular location is the lamellipodium. Its function is as follows. Phosphatidylinositol 3,4,5-trisphosphate-dependent guanine nucleotide exchange factor (GEF) which, independently of RAS, transduces signals from tyrosine kinase receptors to RAC. It also mediates signaling of membrane ruffling. Regulates the actin cytoskeleton as an effector or adapter protein in response to agonist stimulated phosphatidylinositol (3,4)-bisphosphate production and cell protrusion. This is Switch-associated protein 70 (SWAP70) from Gallus gallus (Chicken).